The sequence spans 92 residues: Small ribosomal subunit protein uS19c (92 aa).

This sequence belongs to the universal ribosomal protein uS19 family.

It is found in the plastid. It localises to the chloroplast. Functionally, protein S19 forms a complex with S13 that binds strongly to the 16S ribosomal RNA. This Adiantum capillus-veneris (Maidenhair fern) protein is Small ribosomal subunit protein uS19c.